The sequence spans 345 residues: Heat-inducible transcription repressor HrcA (345 aa).

The protein belongs to the HrcA family.

Functionally, negative regulator of class I heat shock genes (grpE-dnaK-dnaJ and groELS operons). Prevents heat-shock induction of these operons. The protein is Heat-inducible transcription repressor HrcA of Lachnoclostridium phytofermentans (strain ATCC 700394 / DSM 18823 / ISDg) (Clostridium phytofermentans).